Consider the following 208-residue polypeptide: Ribosomal RNA small subunit methyltransferase G (208 aa).

S-adenosyl-L-methionine is bound by residues G73, L78, 124–125 (VE), and R139.

This sequence belongs to the methyltransferase superfamily. RNA methyltransferase RsmG family.

It is found in the cytoplasm. The enzyme catalyses guanosine(527) in 16S rRNA + S-adenosyl-L-methionine = N(7)-methylguanosine(527) in 16S rRNA + S-adenosyl-L-homocysteine. Functionally, specifically methylates the N7 position of guanine in position 527 of 16S rRNA. The protein is Ribosomal RNA small subunit methyltransferase G of Aeromonas salmonicida (strain A449).